Consider the following 235-residue polypeptide: Thiamine import ATP-binding protein ThiQ (235 aa).

One can recognise an ABC transporter domain in the interval 2–230; that stretch reads LKLIDITWLY…QASASALLGI (229 aa). An ATP-binding site is contributed by 32-39; it reads GPSGAGKS.

Belongs to the ABC transporter superfamily. Thiamine importer (TC 3.A.1.19.1) family. The complex is composed of two ATP-binding proteins (ThiQ), two transmembrane proteins (ThiP) and a solute-binding protein (ThiB).

The protein resides in the cell inner membrane. It carries out the reaction thiamine(out) + ATP + H2O = thiamine(in) + ADP + phosphate + H(+). Part of the ABC transporter complex ThiBPQ involved in thiamine import. Responsible for energy coupling to the transport system. The chain is Thiamine import ATP-binding protein ThiQ from Salmonella paratyphi A (strain ATCC 9150 / SARB42).